The chain runs to 219 residues: 7-cyano-7-deazaguanine synthase (219 aa).

F10–L20 is a binding site for ATP. Positions 186, 195, 198, and 201 each coordinate Zn(2+).

The protein belongs to the QueC family. In terms of assembly, homodimer. Requires Zn(2+) as cofactor.

The catalysed reaction is 7-carboxy-7-deazaguanine + NH4(+) + ATP = 7-cyano-7-deazaguanine + ADP + phosphate + H2O + H(+). It participates in purine metabolism; 7-cyano-7-deazaguanine biosynthesis. Functionally, catalyzes the ATP-dependent conversion of 7-carboxy-7-deazaguanine (CDG) to 7-cyano-7-deazaguanine (preQ(0)). The protein is 7-cyano-7-deazaguanine synthase of Bacillus velezensis (strain DSM 23117 / BGSC 10A6 / LMG 26770 / FZB42) (Bacillus amyloliquefaciens subsp. plantarum).